Consider the following 460-residue polypeptide: ATP synthase subunit beta (460 aa).

ATP is bound at residue 150 to 157 (GGAGVGKT).

The protein belongs to the ATPase alpha/beta chains family. As to quaternary structure, F-type ATPases have 2 components, CF(1) - the catalytic core - and CF(0) - the membrane proton channel. CF(1) has five subunits: alpha(3), beta(3), gamma(1), delta(1), epsilon(1). CF(0) has three main subunits: a(1), b(2) and c(9-12). The alpha and beta chains form an alternating ring which encloses part of the gamma chain. CF(1) is attached to CF(0) by a central stalk formed by the gamma and epsilon chains, while a peripheral stalk is formed by the delta and b chains.

It localises to the cell inner membrane. It carries out the reaction ATP + H2O + 4 H(+)(in) = ADP + phosphate + 5 H(+)(out). Functionally, produces ATP from ADP in the presence of a proton gradient across the membrane. The catalytic sites are hosted primarily by the beta subunits. The sequence is that of ATP synthase subunit beta from Serratia proteamaculans (strain 568).